We begin with the raw amino-acid sequence, 265 residues long: 5'-nucleotidase SurE (265 aa).

Residues aspartate 12, aspartate 13, serine 43, and asparagine 91 each coordinate a divalent metal cation.

The protein belongs to the SurE nucleotidase family. Requires a divalent metal cation as cofactor.

It localises to the cytoplasm. It catalyses the reaction a ribonucleoside 5'-phosphate + H2O = a ribonucleoside + phosphate. Its function is as follows. Nucleotidase that shows phosphatase activity on nucleoside 5'-monophosphates. This is 5'-nucleotidase SurE from Haloquadratum walsbyi (strain DSM 16790 / HBSQ001).